The chain runs to 510 residues: Probable gamma-aminobutyrate transaminase 3, mitochondrial (510 aa).

The N-terminal 41 residues, 1 to 41 (MICRSLLLLRSNAASKASNIVKHVAATGCLPKYSSEAPARY), are a transit peptide targeting the mitochondrion. Position 166 to 167 (166 to 167 (GS)) interacts with pyridoxal 5'-phosphate. Y199 lines the substrate pocket. D306 is a binding site for pyridoxal 5'-phosphate. K335 provides a ligand contact to substrate. K335 is modified (N6-(pyridoxal phosphate)lysine).

This sequence belongs to the class-III pyridoxal-phosphate-dependent aminotransferase family.

The protein localises to the mitochondrion. The enzyme catalyses 4-aminobutanoate + pyruvate = succinate semialdehyde + L-alanine. The catalysed reaction is 4-aminobutanoate + glyoxylate = succinate semialdehyde + glycine. Functionally, transaminase that degrades gamma-amino butyric acid (GABA). The polypeptide is Probable gamma-aminobutyrate transaminase 3, mitochondrial (Oryza sativa subsp. japonica (Rice)).